Reading from the N-terminus, the 1239-residue chain is Potassium channel subfamily T member 1 (1239 aa).

The tract at residues 1–45 (MARAKLPRSPSEGKAGPGDTPAGSAAPEEPHGLSPLLPTRGGGSV) is disordered. The Cytoplasmic segment spans residues 1–93 (MARAKLPRSP…LFFIKNQRSS (93 aa)). A helical membrane pass occupies residues 94–126 (LRIRLFNFSLKLLTCLLYIVRVLLDNPDQGIGC). Over 127-153 (WGCTKYNYTFNGSSSEFHWAPILWVER) the chain is Extracellular. N133 and N137 each carry an N-linked (GlcNAc...) asparagine glycan. Residues 154–178 (KMALWVIQVIVATISFLETMLLIYL) form a helical membrane-spanning segment. Residues 179-192 (SYKGNIWEQIFHVS) lie on the Cytoplasmic side of the membrane. A helical membrane pass occupies residues 193 to 208 (FVLEMINTLPFIITVF). At 209-215 (WPPLRNL) the chain is on the extracellular side. The helical transmembrane segment at 216–233 (FIPVFLNCWLAKHALENM) threads the bilayer. The Cytoplasmic segment spans residues 234–246 (INDFHRAILRTQS). Residues 247–274 (AMFNQVLILFCTLLCLVFTGTCGIQHLE) traverse the membrane as a helical segment. The Extracellular segment spans residues 275 to 281 (RAGGNLN). The segment at residues 282–302 (LLTSFYFCIVTFSTVGFGDVT) is an intramembrane region (pore-forming). Positions 296 and 297 each coordinate K(+). Residues 303-304 (PK) lie on the Extracellular side of the membrane. A helical transmembrane segment spans residues 305-338 (IWPSQLLVVILICVTLVVLPLQFEELVYLWMERQ). Topologically, residues 339-1239 (KSGGNYSRHR…NPETRDETQL (901 aa)) are cytoplasmic. Residues 352–488 (EKHVVLCVSS…FHVKFADHVV (137 aa)) form the RCK N-terminal 1 domain. Positions 513, 516, 538, and 540 each coordinate Na(+). The segment at 658 to 689 (QNTDCRPSQGGSGGGGGKLTLPTENGSGSRRP) is disordered. Positions 758 and 759 each coordinate Zn(2+). K(+)-binding residues include R761 and K764. Na(+) is bound by residues R761 and K764. Positions 766 and 768 each coordinate Zn(2+). The K(+) site is built by N769, Y771, Y777, and G778. Residue Y771 participates in Na(+) binding. F779 provides a ligand contact to Na(+). The region spanning 781–921 (NKLIIVSAET…QFRAKDSYSL (141 aa)) is the RCK N-terminal 2 domain. K(+) is bound by residues S787, L818, D820, G842, and D865. 2 disordered regions span residues 1053–1081 (REAKGPWGTRAASGGGSTHGRHGGSADPV) and 1212–1239 (TSSSQSRKSSCSNKLSSCNPETRDETQL). Low complexity predominate over residues 1213–1230 (SSSQSRKSSCSNKLSSCN).

This sequence belongs to the potassium channel family. Calcium-activated (TC 1.A.1.3) subfamily. KCa4.1/KCNT1 sub-subfamily. As to quaternary structure, homotetramer; which constitutes the Na(+)-activated K(+) channel. Interacts with KCNT2; these heterodimer channels differ from the homomers in their unitary conductance, kinetic behavior, subcellular localization, and response to activation of protein kinase C. Interacts (via C-terminus) with FMR1; this interaction alters gating properties of KCNT1. Interacts with CRBN via its cytoplasmic C-terminus. In terms of assembly, does not interact with KCNT2. Post-translationally, phosphorylated by protein kinase C. Phosphorylation of the C-terminal domain increases channel activity. Detected in brain and brainstem, in vestibular and oculomotor nuclei, the medial nucleus of the trapezoid in the auditory system, in olfactory bulb, red nucleus, and deep cerebellar nuclei. Detected in thalamus, substantia nigra, and amygdala (at protein level). Highly expressed in the brain and kidney.

Its subcellular location is the cell membrane. The enzyme catalyses K(+)(in) = K(+)(out). Activated by high intracellular Na(+) level. In addition to activation by Na(+), is cooperatively activated by intracellular Cl(-) levels. Activated upon stimulation of G-protein coupled receptors, such as CHRM1 and GRIA1. Functionally, sodium-activated K(+) channel. Acts as an important mediator of neuronal membrane excitability. Contributes to the delayed outward currents. Regulates neuronal bursting in sensory neurons. Contributes to synaptic development and plasticity. This chain is Potassium channel subfamily T member 1 (Kcnt1), found in Rattus norvegicus (Rat).